Consider the following 286-residue polypeptide: Polyamine aminopropyltransferase (286 aa).

A PABS domain is found at 5–238 (TMWHETLHDQ…GIMTFAWATN (234 aa)). An S-methyl-5'-thioadenosine-binding site is contributed by Q33. Residues H64 and D88 each coordinate spermidine. S-methyl-5'-thioadenosine contacts are provided by residues E108 and 140-141 (DG). D158 functions as the Proton acceptor in the catalytic mechanism. 158–161 (DCTD) is a spermidine binding site. An S-methyl-5'-thioadenosine-binding site is contributed by P165.

This sequence belongs to the spermidine/spermine synthase family. As to quaternary structure, homodimer or homotetramer.

It is found in the cytoplasm. The catalysed reaction is S-adenosyl 3-(methylsulfanyl)propylamine + putrescine = S-methyl-5'-thioadenosine + spermidine + H(+). Its pathway is amine and polyamine biosynthesis; spermidine biosynthesis; spermidine from putrescine: step 1/1. Functionally, catalyzes the irreversible transfer of a propylamine group from the amino donor S-adenosylmethioninamine (decarboxy-AdoMet) to putrescine (1,4-diaminobutane) to yield spermidine. This chain is Polyamine aminopropyltransferase, found in Salmonella paratyphi B (strain ATCC BAA-1250 / SPB7).